The chain runs to 341 residues: Anthranilate phosphoribosyltransferase (341 aa).

Residues G80, 83-84 (GD), T88, 90-93 (NIST), 108-116 (KHGNRSVSS), and S120 contribute to the 5-phospho-alpha-D-ribose 1-diphosphate site. G80 contacts anthranilate. S92 lines the Mg(2+) pocket. Anthranilate is bound at residue N111. An anthranilate-binding site is contributed by R166. D225 and E226 together coordinate Mg(2+).

The protein belongs to the anthranilate phosphoribosyltransferase family. Homodimer. It depends on Mg(2+) as a cofactor.

The enzyme catalyses N-(5-phospho-beta-D-ribosyl)anthranilate + diphosphate = 5-phospho-alpha-D-ribose 1-diphosphate + anthranilate. The protein operates within amino-acid biosynthesis; L-tryptophan biosynthesis; L-tryptophan from chorismate: step 2/5. Catalyzes the transfer of the phosphoribosyl group of 5-phosphorylribose-1-pyrophosphate (PRPP) to anthranilate to yield N-(5'-phosphoribosyl)-anthranilate (PRA). This is Anthranilate phosphoribosyltransferase from Shouchella clausii (strain KSM-K16) (Alkalihalobacillus clausii).